A 1849-amino-acid chain; its full sequence is MLKAVLKKSREGVKGSKKEAGGDFGSETPTLSSSGDSPVNSLSTTEDTYRVSLAKGVSMSLPSSPLLPRQSHLTQSRANKKSPGPVRKPKYVESPRVPGDPVMIPFREGSKPAEPIETEAKVDNEPSCSPAAQELLTRLGFLLGEGIPSATHITIEDKNEAMCTALSQGISPCSTLTSSTASPSTDSPCSTLNSCVSKTAANKSPCETISSPSSTLESKDSGIIATITSSSENDDRSGSSLEWNRDGSLRLGVQKGVLHDRRLDNCSPVAEEETTGSAESVLPKAESSAGDGPVPYSQSSGSLIMPRPNSVAATSSTKLEDLSYLDGQRNAPLRTSIRLPWHSTAGARFAPYKPQEILLKPLLFEVPSITTDSVFVGRDWLFQQIEENLRNTELAENRGAVVVGNVGFGKTAIISKLVALSCHGSRMRQVASSSPSSSLKTSDPTHDLPGTPLLSPSSSTSALSAARTPPGPGTVDSQRPREDAVKYLASRVVAYHYCQADNTYTCLVPEFVHSIATLLCRSHQLAAYRDLLIREPQLQSMLNLRSCVQDPVAAFKRGILEPLTNLRNEQKIPEEEYIILIDGLNEAEFHKPDHGDTLSSFITKIIPKFPPWLKLIVTVRADFQEIISTLPFVKLSLDDFPGNQDIHSDLHAYVQHRVHSSQDILSNISLNGKADAALIGKVSSRLVLRNLGSYLYLKLTLDLFQRGHLVIKSASYKVVPVSLSELYLLQCNMKFMTQSAFDRALPILNVALASLHPMTDEQIFQAINAGHIQGEQGWEDFQQKMEALSCFLIKKRDKTRMFCHPSFREWLVWRADGESTAFLCEPRNGHALLAFMFSRQESKLNRQQTVELGHHILKAHIFKGLSKKTGVSSSHPQALWIGYSTEGLSAALASLRNLYTPNVKVSRLLILGGANVNYRTEVLNNAPILCVQSHLGHEEVVTLLLEFGACLDGMSENGMNALCYAAAAGHMKLVCLLTKKGARVDHLDKKGQCALVHSALRGHSDILQYLLNCEWSAGPPQPGTLRKSQALQQALTAAASMGHSAVVQSLLGMAEEHEIEVNGTDTLWGETALTAAAGRGKLEICELLLERGAAVSRANRRGVPPLFCAARQGHWQVVQLLLDRGCDVNPNDKQGRTPLMVAACEGHLSTVEFLLSKGAALSSLDKEGLSALSWACLKGHRAVVQYLVEEGAEIDQTDKNGRTPLDLAAFYGDAETVLYLVEKGAVIEHVDHSGMRPLDRAIGCRNTAVVVTLLRKGAKLGNAAWAMATFKPDILIILLQKLMEEGNVMYKKGKMKEAAQRYQYALRKFPREGPGEDMRPFNELRVSLYLNLSRCRRKTNDFGLAEEFASKALELKPKSYEAFYARARAKRNSRQFLAALADLQEAVKLCPTNQEIKRLLARVEEECKQLQRNQQQKQQAPLPAPPNDSDNDEEAPASSLKDHFPIEEAEEEDTSSQEESISPTPRSQPPPSVPSPYIRNLQEGLQSKGRPASPQSWAGISKSLRETVAQPGLVMQPTKQAQIVKTNQHLGSGQSSMRNSNTKVQVSSQNPPPSPMPGRVSAAPAVSRNQHLEGTGPFSTGTGCGHFGDRLGPSQSLQLQRGESGTAYPLPSKVKAAERLLAHASVAVDMALPSQGGPVSCSDVRHPASLSSSGSSGSPSSSVKMSSSTSSLTSSSSVSDGFKAQGPDCRIRDRGTTQVQGGTAEHRPRNTPFMGIMDKIARFQQQVNPPSRSWHCPVTEGLLTNTATAAGLQTNSEKPALKPGGYCSQAKPCSVPPLGMGVHNGAQVKELEENKCQVPALCQDNRKTKGVPHLYPEGVSKQPLHVSTEAHRSHLTSAKPKRSFIESNV.

M1 bears the N-acetylmethionine mark. 2 disordered regions span residues 1 to 47 (MLKA…TTED) and 59 to 109 (MSLP…FREG). The span at 8 to 21 (KSREGVKGSKKEAG) shows a compositional bias: basic and acidic residues. Over residues 27 to 46 (ETPTLSSSGDSPVNSLSTTE) the composition is skewed to polar residues. A phosphoserine mark is found at S60, S63, S64, S204, S267, and S455. 2 disordered regions span residues 264–309 (DNCS…PRPN) and 430–481 (VASS…QRPR). Positions 451-468 (TPLLSPSSSTSALSAART) are enriched in low complexity. ANK repeat units lie at residues 886–918 (EGLS…NVNY), 924–953 (NNAP…CLDG), 957–986 (NGMN…RVDH), 990–1019 (KGQC…SAGP), 1030–1059 (ALQQ…EHEI), 1068–1097 (WGET…AVSR), 1101–1130 (RGVP…DVNP), 1134–1163 (QGRT…ALSS), 1167–1196 (EGLS…EIDQ), 1200–1229 (NGRT…VIEH), and 1233–1262 (SGMR…KLGN). 3 TPR repeats span residues 1279-1312 (LQKL…FPRE), 1326-1359 (VSLY…KPKS), and 1361-1393 (EAFY…CPTN). Low complexity predominate over residues 1410-1421 (LQRNQQQKQQAP). Disordered regions lie at residues 1410 to 1503 (LQRN…ISKS), 1527 to 1605 (NQHL…GESG), 1635 to 1711 (QGGP…PRNT), and 1812 to 1849 (PHLY…ESNV). Phosphoserine is present on residues S1429 and S1456. Residues 1447–1456 (EEAEEEDTSS) are compositionally biased toward acidic residues. Polar residues-rich tracts occupy residues 1527–1546 (NQHL…KVQV) and 1593–1603 (PSQSLQLQRGE). Positions 1649-1679 (SLSSSGSSGSPSSSVKMSSSTSSLTSSSSVS) are enriched in low complexity. Residues S1658, S1666, and S1667 each carry the phosphoserine modification.

It belongs to the TANC family. In terms of assembly, interacts probably directly with DLG1, DLG4, HOMER1. Interacts with DLGAP1, INA, CAMK2A, GRIN2B and GRIA1. Interacts with TNIK and MINK1. Phosphorylated; by MINK1 and TNIK upon stimulation by RAP2A. Expressed in heart, lung, liver and kidney. Expressed in brain (at protein level).

It is found in the postsynaptic density. In terms of biological role, may be a scaffold component in the postsynaptic density. The chain is Protein TANC1 (Tanc1) from Rattus norvegicus (Rat).